The chain runs to 24 residues: Calcium-binding shell glycoprotein P50 (24 aa).

The disordered stretch occupies residues 1 to 24; it reads KDALEHTGFAPKKDGEEHVEWNYN.

Post-translationally, glycosylated. Nacreous and prismatic layers of the shell.

Functionally, calcium-binding. In Unio pictorum (Painter's mussel), this protein is Calcium-binding shell glycoprotein P50.